A 408-amino-acid chain; its full sequence is MRTDSGARLEEGHLRPPRALPPVPSQDDIPLSRPKKKKPRTKNTPASASLEGLAQTAGRRPSEGNEPSTKELKEHPEAPVQRRQKKTRLPLELETSSTQKKSSSSSLLRNENGIDAEPAEEAVIQKPRRKTKKTQPAELQYANELGVEDEDIITDEQTTVEQQSVFTAPTGISQPVGKVFVEKSRRFQAADRSELIKTTENIDVSMDVKPSWTTRDVALTVHRAFRMIGLFSHGFLAGCAVWNIVVIYVLAGDQLSNLSNLLQQYKTLAYPFQSLLYLLLALSTISAFDRIDFAKISVAIRNFLALDPTALASFLYFTALILSLSQQMTSDRIHLYTPSSVNGSLWEAGIEEQILQPWIVVNLVVALLVGLSWLFLSYRPGMDLSEELMFSSEVEEYPDKEKEIKASS.

Basic and acidic residues predominate over residues 1–14 (MRTDSGARLEEGHL). The tract at residues 1-137 (MRTDSGARLE…RRKTKKTQPA (137 aa)) is disordered. 2 positions are modified to phosphoserine: S25 and S49. The segment covering 60-77 (RPSEGNEPSTKELKEHPE) has biased composition (basic and acidic residues). The segment covering 95–106 (TSSTQKKSSSSS) has biased composition (low complexity). Helical transmembrane passes span 227–247 (MIGL…IVVI), 268–288 (LAYP…ISAF), 303–323 (FLAL…LILS), and 358–378 (WIVV…FLSY).

This sequence belongs to the TMEM237 family. Part of the tectonic-like complex (also named B9 complex). Interacts with TMEM107.

It is found in the membrane. It localises to the cell projection. The protein resides in the cilium. Component of the transition zone in primary cilia. Required for ciliogenesis. This chain is Transmembrane protein 237 (TMEM237), found in Homo sapiens (Human).